Consider the following 195-residue polypeptide: Imidazoleglycerol-phosphate dehydratase (195 aa).

Belongs to the imidazoleglycerol-phosphate dehydratase family.

The protein localises to the cytoplasm. The enzyme catalyses D-erythro-1-(imidazol-4-yl)glycerol 3-phosphate = 3-(imidazol-4-yl)-2-oxopropyl phosphate + H2O. The protein operates within amino-acid biosynthesis; L-histidine biosynthesis; L-histidine from 5-phospho-alpha-D-ribose 1-diphosphate: step 6/9. In Exiguobacterium sp. (strain ATCC BAA-1283 / AT1b), this protein is Imidazoleglycerol-phosphate dehydratase.